We begin with the raw amino-acid sequence, 225 residues long: Histone-arginine methyltransferase METTL23 (225 aa).

The protein belongs to the methyltransferase superfamily. METTL23 family. In terms of assembly, interacts with HSPA5, HSP90B1, TUBULIN, UGGT1 and UGGT2. Interacts with TET3. Interacts with STPG4.

The protein resides in the nucleus. The protein localises to the cytoplasm. The enzyme catalyses L-arginyl-[protein] + 2 S-adenosyl-L-methionine = N(omega),N(omega)-dimethyl-L-arginyl-[protein] + 2 S-adenosyl-L-homocysteine + 2 H(+). Functionally, histone methyltransferase that dimethylates histone H3 at 'Arg-17', forming asymmetric dimethylarginine (H3R17me2a), leading to activate transcription via chromatin remodeling. Maternal factor involved in epigenetic chromatin reprogramming of the paternal genome in the zygote: mediates H3R17me2a, promoting histone H3.3 incorporation in the male pronucleus, leading to TET3 recruitment and subsequent DNA demethylation. The chain is Histone-arginine methyltransferase METTL23 from Rattus norvegicus (Rat).